Consider the following 117-residue polypeptide: Iron-sulfur cluster insertion protein ErpA (117 aa).

The iron-sulfur cluster site is built by C45, C109, and C111.

This sequence belongs to the HesB/IscA family. Homodimer. Iron-sulfur cluster is required as a cofactor.

Functionally, required for insertion of 4Fe-4S clusters for at least IspG. This is Iron-sulfur cluster insertion protein ErpA from Blochmanniella pennsylvanica (strain BPEN).